A 389-amino-acid polypeptide reads, in one-letter code: ATP-dependent (S)-NAD(P)H-hydrate dehydratase (389 aa).

The region spanning 53-389 is the YjeF C-terminal domain; the sequence is TLQLVRNIIP…RGGGRLPQAL (337 aa). Tyr-85 carries the phosphotyrosine modification. Residues Glu-153 and 205–211 contribute to the (6S)-NADPHX site; that span reads NHMEFSR. Residues 245-249 and 264-273 contribute to the ATP site; these read KGERD and GSSRRCGGQG. Asp-274 is a (6S)-NADPHX binding site. Disordered regions lie at residues 316–350 and 369–389; these read KTRA…PGGC and RSLH…PQAL.

It belongs to the NnrD/CARKD family. Requires Mg(2+) as cofactor.

The protein resides in the mitochondrion. The enzyme catalyses (6S)-NADHX + ATP = ADP + phosphate + NADH + H(+). The catalysed reaction is (6S)-NADPHX + ATP = ADP + phosphate + NADPH + H(+). Catalyzes the dehydration of the S-form of NAD(P)HX at the expense of ATP, which is converted to ADP. Together with NAD(P)HX epimerase, which catalyzes the epimerization of the S- and R-forms, the enzyme allows the repair of both epimers of NAD(P)HX, a damaged form of NAD(P)H that is a result of enzymatic or heat-dependent hydration. The protein is ATP-dependent (S)-NAD(P)H-hydrate dehydratase of Macaca mulatta (Rhesus macaque).